The primary structure comprises 101 residues: NADH-quinone oxidoreductase subunit K (101 aa).

3 helical membrane passes run 4-24 (LSHY…GIFL), 30-50 (IVLL…FIAF), and 61-81 (IFVF…LAIL).

The protein belongs to the complex I subunit 4L family. As to quaternary structure, NDH-1 is composed of 14 different subunits. Subunits NuoA, H, J, K, L, M, N constitute the membrane sector of the complex.

It is found in the cell inner membrane. The catalysed reaction is a quinone + NADH + 5 H(+)(in) = a quinol + NAD(+) + 4 H(+)(out). In terms of biological role, NDH-1 shuttles electrons from NADH, via FMN and iron-sulfur (Fe-S) centers, to quinones in the respiratory chain. The immediate electron acceptor for the enzyme in this species is believed to be ubiquinone. Couples the redox reaction to proton translocation (for every two electrons transferred, four hydrogen ions are translocated across the cytoplasmic membrane), and thus conserves the redox energy in a proton gradient. The chain is NADH-quinone oxidoreductase subunit K from Aromatoleum aromaticum (strain DSM 19018 / LMG 30748 / EbN1) (Azoarcus sp. (strain EbN1)).